The sequence spans 236 residues: 1-(5-phosphoribosyl)-5-[(5-phosphoribosylamino)methylideneamino] imidazole-4-carboxamide isomerase (236 aa).

The active-site Proton acceptor is D8. D127 (proton donor) is an active-site residue.

It belongs to the HisA/HisF family.

It localises to the cytoplasm. It carries out the reaction 1-(5-phospho-beta-D-ribosyl)-5-[(5-phospho-beta-D-ribosylamino)methylideneamino]imidazole-4-carboxamide = 5-[(5-phospho-1-deoxy-D-ribulos-1-ylimino)methylamino]-1-(5-phospho-beta-D-ribosyl)imidazole-4-carboxamide. It functions in the pathway amino-acid biosynthesis; L-histidine biosynthesis; L-histidine from 5-phospho-alpha-D-ribose 1-diphosphate: step 4/9. The sequence is that of 1-(5-phosphoribosyl)-5-[(5-phosphoribosylamino)methylideneamino] imidazole-4-carboxamide isomerase from Campylobacter concisus (strain 13826).